We begin with the raw amino-acid sequence, 461 residues long: ATP-dependent protease ATPase subunit HslU (461 aa).

ATP contacts are provided by residues isoleucine 18 and 60–65; that span reads GVGKTE. The disordered stretch occupies residues 157–178; the sequence is EGSSVKPEPTAQQKESRQKMRK. The ATP site is built by aspartate 273, glutamate 339, and arginine 411.

It belongs to the ClpX chaperone family. HslU subfamily. In terms of assembly, a double ring-shaped homohexamer of HslV is capped on each side by a ring-shaped HslU homohexamer. The assembly of the HslU/HslV complex is dependent on binding of ATP.

It is found in the cytoplasm. ATPase subunit of a proteasome-like degradation complex; this subunit has chaperone activity. The binding of ATP and its subsequent hydrolysis by HslU are essential for unfolding of protein substrates subsequently hydrolyzed by HslV. HslU recognizes the N-terminal part of its protein substrates and unfolds these before they are guided to HslV for hydrolysis. This is ATP-dependent protease ATPase subunit HslU from Magnetococcus marinus (strain ATCC BAA-1437 / JCM 17883 / MC-1).